The primary structure comprises 99 residues: Integration host factor subunit alpha (99 aa).

The tract at residues Phe49–Asp70 is disordered.

Belongs to the bacterial histone-like protein family. As to quaternary structure, heterodimer of an alpha and a beta chain.

Its function is as follows. This protein is one of the two subunits of integration host factor, a specific DNA-binding protein that functions in genetic recombination as well as in transcriptional and translational control. This Cronobacter sakazakii (strain ATCC BAA-894) (Enterobacter sakazakii) protein is Integration host factor subunit alpha.